A 151-amino-acid chain; its full sequence is Globin CTT-X (151 aa).

The Globin domain occupies 6-150; the sequence is TLDAHEVEQV…AFSVIFEVLE (145 aa). Residues histidine 64 and histidine 99 each coordinate heme b.

The protein belongs to the globin family. As to quaternary structure, homodimer.

In Chironomus thummi thummi (Midge), this protein is Globin CTT-X (CTT-10).